The sequence spans 257 residues: Meiotically up-regulated gene 14 protein (257 aa).

The protein resides in the cytoplasm. It localises to the nucleus. In terms of biological role, has a role in meiosis. The sequence is that of Meiotically up-regulated gene 14 protein (mug14) from Schizosaccharomyces pombe (strain 972 / ATCC 24843) (Fission yeast).